Consider the following 105-residue polypeptide: Met repressor (105 aa).

Belongs to the MetJ family. As to quaternary structure, homodimer.

Its subcellular location is the cytoplasm. Functionally, this regulatory protein, when combined with SAM (S-adenosylmethionine) represses the expression of the methionine regulon and of enzymes involved in SAM synthesis. In Haemophilus influenzae (strain PittEE), this protein is Met repressor.